The following is a 208-amino-acid chain: MEVICKHYTPLDIASQAIRTCWQSFEYSDDGGCKDRDLIHRVGNIFRHSSTLEHLYYNFEIKGLSRGALQELSRHRIASLSVKSSRYTLRELKEVESFLPLNETNLERAKEFLVFVDDEKVNEMSVLALENLRVLLSEHNIKNDLAKYAMPESYKTHLAYSINARSLQNLLTLRSSNKALKEMQDLAKALFDALPYEHQYLFEDCLKH.

The 208-residue stretch at 1–208 (MEVICKHYTP…QYLFEDCLKH (208 aa)) folds into the ThyX domain. FAD-binding positions include Ser-50 and 74 to 76 (RHR). DUMP contacts are provided by residues 71-74 (ELSR), 84-86 (SSR), and Lys-147. The ThyX motif motif lies at 74 to 84 (RHRIASLSVKS). FAD-binding positions include 163–165 (NAR) and Asn-169. Arg-174 contacts dUMP. Arg-174 serves as the catalytic Involved in ionization of N3 of dUMP, leading to its activation.

Belongs to the thymidylate synthase ThyX family. As to quaternary structure, homotetramer. The cofactor is FAD.

The enzyme catalyses dUMP + (6R)-5,10-methylene-5,6,7,8-tetrahydrofolate + NADPH + H(+) = dTMP + (6S)-5,6,7,8-tetrahydrofolate + NADP(+). The protein operates within pyrimidine metabolism; dTTP biosynthesis. Its function is as follows. Catalyzes the reductive methylation of 2'-deoxyuridine-5'-monophosphate (dUMP) to 2'-deoxythymidine-5'-monophosphate (dTMP) while utilizing 5,10-methylenetetrahydrofolate (mTHF) as the methyl donor, and NADPH and FADH(2) as the reductant. This chain is Flavin-dependent thymidylate synthase, found in Helicobacter pylori (strain J99 / ATCC 700824) (Campylobacter pylori J99).